Reading from the N-terminus, the 218-residue chain is Probable GTP-binding protein EngB (218 aa).

The EngB-type G domain occupies 21-192 (NAPQIALAGR…WQELHRLAFP (172 aa)). GTP is bound by residues 29–36 (GRSNVGKS), 56–60 (GKTRS), 75–78 (DLPG), 142–145 (TKAD), and 171–173 (FSS). The Mg(2+) site is built by Ser36 and Thr58. Positions 194–218 (MAFDTPSDGAPEPADEPEAASERAE) are disordered.

Belongs to the TRAFAC class TrmE-Era-EngA-EngB-Septin-like GTPase superfamily. EngB GTPase family. It depends on Mg(2+) as a cofactor.

Necessary for normal cell division and for the maintenance of normal septation. The chain is Probable GTP-binding protein EngB from Oleidesulfovibrio alaskensis (strain ATCC BAA-1058 / DSM 17464 / G20) (Desulfovibrio alaskensis).